Here is a 162-residue protein sequence, read N- to C-terminus: ATP synthase subunit b 1 (162 aa).

Residues 1 to 21 (MLLTAEFWVAVAFVAFLVIVW) form a helical membrane-spanning segment.

This sequence belongs to the ATPase B chain family. In terms of assembly, F-type ATPases have 2 components, F(1) - the catalytic core - and F(0) - the membrane proton channel. F(1) has five subunits: alpha(3), beta(3), gamma(1), delta(1), epsilon(1). F(0) has three main subunits: a(1), b(2) and c(10-14). The alpha and beta chains form an alternating ring which encloses part of the gamma chain. F(1) is attached to F(0) by a central stalk formed by the gamma and epsilon chains, while a peripheral stalk is formed by the delta and b chains.

The protein localises to the cell inner membrane. Its function is as follows. F(1)F(0) ATP synthase produces ATP from ADP in the presence of a proton or sodium gradient. F-type ATPases consist of two structural domains, F(1) containing the extramembraneous catalytic core and F(0) containing the membrane proton channel, linked together by a central stalk and a peripheral stalk. During catalysis, ATP synthesis in the catalytic domain of F(1) is coupled via a rotary mechanism of the central stalk subunits to proton translocation. Functionally, component of the F(0) channel, it forms part of the peripheral stalk, linking F(1) to F(0). The polypeptide is ATP synthase subunit b 1 (Methylorubrum extorquens (strain PA1) (Methylobacterium extorquens)).